A 416-amino-acid chain; its full sequence is MSAEIICVGTELLLGDILNGNAQFLAQQLAQLGIPHYYQTVVGDNPERLKQVIEIAISRAQILIFTGGLGPTPDDLTCETIADFFKTPLVENPEIIEDITQKFAQRGRVMSPSNRKQALIPQGAEILPNPTGTAPGIIWQPRPKITIFTFPGVPSEMHPMWEETAVPFLKSQGWGKEIIYSRSLKFWGIGESALAEKVSSYLKLPNPTVAPYAGKGEVRLRVSAKATSEAAAEDLIAPIEKQLKEIAGLDFYGVNNDTLASVVGELLRASKETLSVAESCTGGGLGQMLTEISGSSDYFWGGVISYDNSVKIKLLGVNQEDLDKFGAVSATVAEQMAIGVKTRLATTWGLSITGIAGPTGGTDTKPVGLVYVGLAGPKDEVTSFEYQFGTVRGRALIRHVSANAALDNLRRKLLTR.

The protein belongs to the CinA family.

This is CinA-like protein from Nostoc punctiforme (strain ATCC 29133 / PCC 73102).